Reading from the N-terminus, the 169-residue chain is Benzoate 1,2-dioxygenase subunit beta (169 aa).

The protein belongs to the bacterial ring-hydroxylating dioxygenase beta subunit family. This dioxygenase system consists of three proteins: the two subunits of the hydroxylase (BenA and BenB), and an electron transfer component (BenC).

The catalysed reaction is benzoate + NADH + O2 + H(+) = (1R,6S)-1,6-dihydroxycyclohexa-2,4-diene-1-carboxylate + NAD(+). It participates in aromatic compound metabolism; benzoate degradation via hydroxylation; catechol from benzoate: step 1/2. Its function is as follows. Degradation of benzoate to 2-hydro-1,2-dihydroxybenzoate (DHB). The beta subunit may be responsible for the substrate specificity of the enzyme. The polypeptide is Benzoate 1,2-dioxygenase subunit beta (benB) (Acinetobacter baylyi (strain ATCC 33305 / BD413 / ADP1)).